Consider the following 160-residue polypeptide: Succinate dehydrogenase assembly factor 2-B, mitochondrial (160 aa).

The N-terminal 23 residues, 1–23 (MLRQLKLTLNISRWIFMPWQRHA), are a transit peptide targeting the mitochondrion.

This sequence belongs to the SDHAF2 family. In terms of assembly, interacts with the flavoprotein subunit within the SDH catalytic dimer.

The protein localises to the mitochondrion matrix. Its function is as follows. Plays an essential role in the assembly of succinate dehydrogenase (SDH), an enzyme complex (also referred to as respiratory complex II) that is a component of both the tricarboxylic acid (TCA) cycle and the mitochondrial electron transport chain, and which couples the oxidation of succinate to fumarate with the reduction of ubiquinone (coenzyme Q) to ubiquinol. Required for flavinylation (covalent attachment of FAD) of the flavoprotein subunit of the SDH catalytic dimer. The protein is Succinate dehydrogenase assembly factor 2-B, mitochondrial of Drosophila pseudoobscura pseudoobscura (Fruit fly).